The chain runs to 247 residues: ATP synthase subunit a, chloroplastic (247 aa).

Transmembrane regions (helical) follow at residues 38–58 (QVLI…TLAV), 95–115 (VPFI…GALL), 134–154 (INTT…AGLT), 199–219 (LVVV…VMFL), and 220–240 (GLFT…AYIG).

The protein belongs to the ATPase A chain family. In terms of assembly, F-type ATPases have 2 components, CF(1) - the catalytic core - and CF(0) - the membrane proton channel. CF(1) has five subunits: alpha(3), beta(3), gamma(1), delta(1), epsilon(1). CF(0) has four main subunits: a, b, b' and c.

The protein localises to the plastid. It localises to the chloroplast thylakoid membrane. Its function is as follows. Key component of the proton channel; it plays a direct role in the translocation of protons across the membrane. The protein is ATP synthase subunit a, chloroplastic of Jasminum nudiflorum (Winter jasmine).